The sequence spans 184 residues: uncharacterized protein (184 aa).

Positions 1-20 (MYQLEKIWVLLCLALVGVLG) are cleaved as a signal peptide.

This is an uncharacterized protein from Drosophila melanogaster (Fruit fly).